Consider the following 145-residue polypeptide: D-aminoacyl-tRNA deacylase (145 aa).

Residues 137 to 138 (GP) carry the Gly-cisPro motif, important for rejection of L-amino acids motif.

This sequence belongs to the DTD family. Homodimer.

It localises to the cytoplasm. The catalysed reaction is glycyl-tRNA(Ala) + H2O = tRNA(Ala) + glycine + H(+). It catalyses the reaction a D-aminoacyl-tRNA + H2O = a tRNA + a D-alpha-amino acid + H(+). In terms of biological role, an aminoacyl-tRNA editing enzyme that deacylates mischarged D-aminoacyl-tRNAs. Also deacylates mischarged glycyl-tRNA(Ala), protecting cells against glycine mischarging by AlaRS. Acts via tRNA-based rather than protein-based catalysis; rejects L-amino acids rather than detecting D-amino acids in the active site. By recycling D-aminoacyl-tRNA to D-amino acids and free tRNA molecules, this enzyme counteracts the toxicity associated with the formation of D-aminoacyl-tRNA entities in vivo and helps enforce protein L-homochirality. The polypeptide is D-aminoacyl-tRNA deacylase (Dinoroseobacter shibae (strain DSM 16493 / NCIMB 14021 / DFL 12)).